A 317-amino-acid chain; its full sequence is Lipoyl synthase (317 aa).

[4Fe-4S] cluster-binding residues include Cys-55, Cys-60, Cys-66, Cys-81, Cys-85, Cys-88, and Ser-292. A Radical SAM core domain is found at 67–281; that stretch reads WEDREATFLI…ERYATEIGFA (215 aa).

It belongs to the radical SAM superfamily. Lipoyl synthase family. [4Fe-4S] cluster is required as a cofactor.

The protein resides in the cytoplasm. The catalysed reaction is [[Fe-S] cluster scaffold protein carrying a second [4Fe-4S](2+) cluster] + N(6)-octanoyl-L-lysyl-[protein] + 2 oxidized [2Fe-2S]-[ferredoxin] + 2 S-adenosyl-L-methionine + 4 H(+) = [[Fe-S] cluster scaffold protein] + N(6)-[(R)-dihydrolipoyl]-L-lysyl-[protein] + 4 Fe(3+) + 2 hydrogen sulfide + 2 5'-deoxyadenosine + 2 L-methionine + 2 reduced [2Fe-2S]-[ferredoxin]. It participates in protein modification; protein lipoylation via endogenous pathway; protein N(6)-(lipoyl)lysine from octanoyl-[acyl-carrier-protein]: step 2/2. Functionally, catalyzes the radical-mediated insertion of two sulfur atoms into the C-6 and C-8 positions of the octanoyl moiety bound to the lipoyl domains of lipoate-dependent enzymes, thereby converting the octanoylated domains into lipoylated derivatives. In Mycolicibacterium gilvum (strain PYR-GCK) (Mycobacterium gilvum (strain PYR-GCK)), this protein is Lipoyl synthase.